Consider the following 122-residue polypeptide: Acidic phospholipase A2 Tpu-E6b (122 aa).

7 cysteine pairs are disulfide-bonded: cysteine 26-cysteine 115, cysteine 28-cysteine 44, cysteine 43-cysteine 95, cysteine 49-cysteine 122, cysteine 50-cysteine 88, cysteine 57-cysteine 81, and cysteine 75-cysteine 86. Tyrosine 27, glycine 29, and glycine 31 together coordinate Ca(2+). Residue histidine 47 is part of the active site. A Ca(2+)-binding site is contributed by aspartate 48. The active site involves aspartate 89.

In terms of assembly, monomer. Ca(2+) is required as a cofactor. As to expression, expressed by the venom gland.

The protein localises to the secreted. The enzyme catalyses a 1,2-diacyl-sn-glycero-3-phosphocholine + H2O = a 1-acyl-sn-glycero-3-phosphocholine + a fatty acid + H(+). In terms of biological role, snake venom phospholipase A2 (PLA2) that weakly inhibits ADP-induced platelet aggregation when tested on platelet rich plasma from human and rabbit blood (15-25% of inhibition at 5-10 ug of enzyme). Exhibits moderate hydrolytic activities toward L-dipalmitoyl phosphatidylcholine. PLA2 catalyzes the calcium-dependent hydrolysis of the 2-acyl groups in 3-sn-phosphoglycerides. In Craspedocephalus puniceus (Flat-nosed pitviper), this protein is Acidic phospholipase A2 Tpu-E6b.